The sequence spans 99 residues: Large ribosomal subunit protein uL23 (99 aa).

Belongs to the universal ribosomal protein uL23 family. Part of the 50S ribosomal subunit. Contacts protein L29, and trigger factor when it is bound to the ribosome.

In terms of biological role, one of the early assembly proteins it binds 23S rRNA. One of the proteins that surrounds the polypeptide exit tunnel on the outside of the ribosome. Forms the main docking site for trigger factor binding to the ribosome. This is Large ribosomal subunit protein uL23 from Stenotrophomonas maltophilia (strain R551-3).